Consider the following 365-residue polypeptide: Peptide chain release factor 2 (365 aa).

Gln252 is modified (N5-methylglutamine).

The protein belongs to the prokaryotic/mitochondrial release factor family. In terms of processing, methylated by PrmC. Methylation increases the termination efficiency of RF2.

The protein resides in the cytoplasm. Functionally, peptide chain release factor 2 directs the termination of translation in response to the peptide chain termination codons UGA and UAA. This Aeromonas hydrophila subsp. hydrophila (strain ATCC 7966 / DSM 30187 / BCRC 13018 / CCUG 14551 / JCM 1027 / KCTC 2358 / NCIMB 9240 / NCTC 8049) protein is Peptide chain release factor 2.